Here is a 700-residue protein sequence, read N- to C-terminus: MNNNKGGFLRSSVFYIFIFLAVVGMVYGLFGNDKTTTKTITSSEFIKALNDKELKSVTVQPGNSIYNVTGTYKKAQTATKDKGLSLFQPTQKVTKFTSTLLPNDASLKSVTDAATKTKTELVTKQAENSGFWLNLLVSLVPVLLIVAVFYLMMNQAGGGKGGQGGMMSFGKSKAKPSDPKDNKVRFADVAGAEEEKQELVEVVEFLKAPKKFVNLGARIPKGVLLEGPPGTGKTLLAKAVAGEASVPFFSMSGSDFVEMFVGVGASRVRDLFENAKKSAPAIIFIDEIDAVGRRRGTGMGGGNDEREQTLNQILIEMDGFEGSEGVIILASTNRSDVLDPALLRSGRFDRKILVGAPDVKGREAILNVHAKNKPLADNVDLKAIAQQTPGYVGADLENLLNEAALLAARRNKSKVDAADIDEAEDRIFQGPAKTNHNMSESERRTTAYHEAGHALVGLVRSEASVVRKVTIVPRGRIGGYALMTPKNDRYNLKYSEAKEQLAGLMGGRASEIFMFNEASSGASNDFQQATGLARQMVTAFGMSDKLGMVQLEGNASVGYADQAGNRAYSEETARLIDEEVRRLAREAFDDAIAILRDNKDKLTAIAEALLEVETLDEKQIKDIYLTGTFTRKDIQDDTELAKAKSFEEAKAAADAKDSQAEQRFEKQDEEKSSDDHSESKNEDTDSTDKSETDDNNTENK.

Residues 1-10 lie on the Cytoplasmic side of the membrane; it reads MNNNKGGFLR. A helical transmembrane segment spans residues 11 to 31; that stretch reads SSVFYIFIFLAVVGMVYGLFG. The Extracellular portion of the chain corresponds to 32–130; that stretch reads NDKTTTKTIT…LVTKQAENSG (99 aa). A helical membrane pass occupies residues 131 to 151; the sequence is FWLNLLVSLVPVLLIVAVFYL. Residues 152 to 700 lie on the Cytoplasmic side of the membrane; it reads MMNQAGGGKG…ETDDNNTENK (549 aa). 227-234 contacts ATP; that stretch reads GPPGTGKT. Position 449 (H449) interacts with Zn(2+). Residue E450 is part of the active site. Positions 453 and 525 each coordinate Zn(2+). The tract at residues 644-700 is disordered; that stretch reads KSFEEAKAAADAKDSQAEQRFEKQDEEKSSDDHSESKNEDTDSTDKSETDDNNTENK.

The protein in the central section; belongs to the AAA ATPase family. This sequence in the C-terminal section; belongs to the peptidase M41 family. Homohexamer. The cofactor is Zn(2+).

It is found in the cell membrane. Acts as a processive, ATP-dependent zinc metallopeptidase for both cytoplasmic and membrane proteins. Plays a role in the quality control of integral membrane proteins. The sequence is that of ATP-dependent zinc metalloprotease FtsH from Leuconostoc mesenteroides subsp. mesenteroides (strain ATCC 8293 / DSM 20343 / BCRC 11652 / CCM 1803 / JCM 6124 / NCDO 523 / NBRC 100496 / NCIMB 8023 / NCTC 12954 / NRRL B-1118 / 37Y).